The primary structure comprises 181 residues: RING-H2 finger protein ATL72 (181 aa).

Residues 34 to 54 (VIILAALLCALICALSLNSAL) traverse the membrane as a helical segment. The RING-type; atypical zinc-finger motif lies at 114–156 (CLICLGDFEDGEKVRVLPKCNHGFHVRCIDTWLLSRSSCPTCR).

It belongs to the RING-type zinc finger family. ATL subfamily.

The protein localises to the membrane. The catalysed reaction is S-ubiquitinyl-[E2 ubiquitin-conjugating enzyme]-L-cysteine + [acceptor protein]-L-lysine = [E2 ubiquitin-conjugating enzyme]-L-cysteine + N(6)-ubiquitinyl-[acceptor protein]-L-lysine.. It functions in the pathway protein modification; protein ubiquitination. This Arabidopsis thaliana (Mouse-ear cress) protein is RING-H2 finger protein ATL72 (ATL72).